The primary structure comprises 1472 residues: Type IV pilus biogenesis factor PilY1 homolog PD_1611 (1472 aa).

Ca(2+)-binding residues include Asp1170, Asp1172, Asp1174, Leu1176, and Asp1178. The span at 1383–1397 shows a compositional bias: polar residues; sequence RGSRSSIGNSDTGAV. Residues 1383-1403 form a disordered region; the sequence is RGSRSSIGNSDTGAVSTGGDA.

It belongs to the PilY1 family.

It localises to the fimbrium. In terms of biological role, one of the three PilY1 homologs of X.fastidiosa, which are involved in bacterial twitching motility as component of the filamentous type IV pili (T4P). The twitching motility of this protein is enhanced by calcium, which may provide the bacterium an adaptive advantage in environments with high calcium concentrations. This chain is Type IV pilus biogenesis factor PilY1 homolog PD_1611, found in Xylella fastidiosa (strain Temecula1 / ATCC 700964).